A 418-amino-acid chain; its full sequence is L-rhamnose isomerase (418 aa).

Mn(2+) contacts are provided by H262, D294, and D296.

This sequence belongs to the rhamnose isomerase family. Homotetramer. It depends on Mn(2+) as a cofactor.

It localises to the cytoplasm. The enzyme catalyses L-rhamnopyranose = L-rhamnulose. It participates in carbohydrate degradation; L-rhamnose degradation; glycerone phosphate from L-rhamnose: step 1/3. In terms of biological role, catalyzes the interconversion of L-rhamnose and L-rhamnulose. This is L-rhamnose isomerase from Yersinia pseudotuberculosis serotype O:1b (strain IP 31758).